Reading from the N-terminus, the 2054-residue chain is Multiple PDZ domain protein (2054 aa).

An L27 domain is found at 3 to 63 (ETIDKNRALQ…SLQQLKDQVN (61 aa)). The 88-residue stretch at 138–225 (IFELLKPPCG…TIQLVIARGS (88 aa)) folds into the PDZ 1 domain. Ser231 bears the Phosphoserine mark. PDZ domains lie at 258 to 338 (TIEL…ARGA), 377 to 463 (DVEL…MRKG), 545 to 626 (VAHV…CRRT), and 692 to 778 (AIEL…VAKP). A phosphoserine mark is found at Ser782 and Ser1065. The 82-residue stretch at 995-1076 (TVTIAKGSSS…IGPDIKITYV (82 aa)) folds into the PDZ 6 domain. The segment at 1110-1129 (PELPEREEGEGEESELQNAA) is disordered. A PDZ 7 domain is found at 1138 to 1230 (RVELWREPSK…PVVFMVQSIV (93 aa)). Arg1157 is modified (omega-N-methylarginine). Polar residues predominate over residues 1261-1273 (LQLTSDKAPSQSE). The segment at 1261–1312 (LQLTSDKAPSQSESESEKATLCSVPSSSPSVFSEMSSDYAQPSATTVAEDED) is disordered. The span at 1283–1297 (SVPSSSPSVFSEMSS) shows a compositional bias: low complexity. One can recognise a PDZ 8 domain in the interval 1337–1420 (MIELEKGHSG…KVKIIFIRNA (84 aa)). The tract at residues 1433-1454 (AADPLPSTSESPQNKEVEPSIT) is disordered. The region spanning 1470 to 1551 (HLELPKDQGG…TVKLTVGAEN (82 aa)) is the PDZ 9 domain. The disordered stretch occupies residues 1560-1594 (AAVTASGERKDSSQTPAVPAPDLEPIPSTSRSSTP). PDZ domains follow at residues 1613 to 1696 (TIEI…YRDE) and 1709 to 1791 (TVEL…GRIK). A disordered region spans residues 1795-1834 (FHSERRPSQSSQVSESSLSSFSLPRSGIHTSESSESSAKK). Residues Ser1802 and Ser1808 each carry the phosphoserine modification. Residues 1802 to 1834 (SQSSQVSESSLSSFSLPRSGIHTSESSESSAKK) are compositionally biased toward low complexity. 2 consecutive PDZ domains span residues 1846–1932 (TVEI…VAGG) and 1971–2054 (TITL…MVLS).

Interacts with F11R/JAM, CLDN1, NG2, CXADR, CRB1, MPP4 and PALS1, HTR2A, HTR2B, PLEKHA1/TAPP1 and PLEKHA2/TAPP2. Interacts with CXADR. Interacts with HTR2C, CLDN5, DLG4, GRIN1, SYNGAP1, CAMK2A and CAMK2B. Interacts with FAT4 (via cytoplasmic domain). Interacts with DLL1. In terms of tissue distribution, abundant in all cerebral cortical layers, especially the piriform cortex, the pyramidal cells of the CA1-CA3 subfields of the hippocampus, as well as the granular layer of the dentate gyrus. Detected in the internal granular layer and the mitral cell layer of the olfactory bulb; in the medial habenular nucleus; and in amygdaloid, thalamic, hypothalamic, and pontine nuclei. In the cerebellum, found at high levels in the granular layer. Detected in the lateral ventricle. Expression overlaps with 5-HT2C receptor expression in all regions of the brain including the choroid plexus, where 5-HT2C receptors are highly enriched.

The protein resides in the endomembrane system. The protein localises to the cell junction. Its subcellular location is the tight junction. It localises to the synapse. It is found in the apical cell membrane. The protein resides in the postsynaptic density. The protein localises to the cell projection. Its subcellular location is the dendrite. It localises to the synaptosome. In terms of biological role, member of the NMDAR signaling complex that may play a role in control of AMPAR potentiation and synaptic plasticity in excitatory synapses. Promotes clustering of HT2RC at the cell surface. This Rattus norvegicus (Rat) protein is Multiple PDZ domain protein (Mpdz).